The primary structure comprises 423 residues: Histidine--tRNA ligase (423 aa).

It belongs to the class-II aminoacyl-tRNA synthetase family. Homodimer.

It is found in the cytoplasm. It catalyses the reaction tRNA(His) + L-histidine + ATP = L-histidyl-tRNA(His) + AMP + diphosphate + H(+). The protein is Histidine--tRNA ligase (hisS) of Pasteurella multocida (strain Pm70).